We begin with the raw amino-acid sequence, 175 residues long: Co-chaperone protein HscB homolog (175 aa).

The J domain occupies 7–79 (SHFELFHLPA…LKRATYLLHL (73 aa)).

It belongs to the HscB family. In terms of assembly, interacts with HscA and stimulates its ATPase activity.

In terms of biological role, co-chaperone involved in the maturation of iron-sulfur cluster-containing proteins. Seems to help targeting proteins to be folded toward HscA. The sequence is that of Co-chaperone protein HscB homolog from Burkholderia thailandensis (strain ATCC 700388 / DSM 13276 / CCUG 48851 / CIP 106301 / E264).